The following is a 169-amino-acid chain: Ribosome maturation factor RimM (169 aa).

The 73-residue stretch at E97–Y169 folds into the PRC barrel domain.

Belongs to the RimM family. As to quaternary structure, binds ribosomal protein uS19.

Its subcellular location is the cytoplasm. In terms of biological role, an accessory protein needed during the final step in the assembly of 30S ribosomal subunit, possibly for assembly of the head region. Essential for efficient processing of 16S rRNA. May be needed both before and after RbfA during the maturation of 16S rRNA. It has affinity for free ribosomal 30S subunits but not for 70S ribosomes. The sequence is that of Ribosome maturation factor RimM from Francisella tularensis subsp. tularensis (strain WY96-3418).